A 270-amino-acid polypeptide reads, in one-letter code: Acetylglutamate kinase (270 aa).

Residues 53 to 54 (GG), arginine 75, and asparagine 167 contribute to the substrate site.

Belongs to the acetylglutamate kinase family. ArgB subfamily.

The protein resides in the cytoplasm. It carries out the reaction N-acetyl-L-glutamate + ATP = N-acetyl-L-glutamyl 5-phosphate + ADP. Its pathway is amino-acid biosynthesis; L-arginine biosynthesis; N(2)-acetyl-L-ornithine from L-glutamate: step 2/4. In terms of biological role, catalyzes the ATP-dependent phosphorylation of N-acetyl-L-glutamate. This Shewanella halifaxensis (strain HAW-EB4) protein is Acetylglutamate kinase.